Reading from the N-terminus, the 126-residue chain is Small ribosomal subunit protein uS13 (126 aa).

The segment at 93–126 is disordered; the sequence is RRGLPVRGQRTKTNARTRKGPKRTVAGKKKAGRK.

It belongs to the universal ribosomal protein uS13 family. In terms of assembly, part of the 30S ribosomal subunit. Forms a loose heterodimer with protein S19. Forms two bridges to the 50S subunit in the 70S ribosome.

Its function is as follows. Located at the top of the head of the 30S subunit, it contacts several helices of the 16S rRNA. In the 70S ribosome it contacts the 23S rRNA (bridge B1a) and protein L5 of the 50S subunit (bridge B1b), connecting the 2 subunits; these bridges are implicated in subunit movement. Contacts the tRNAs in the A and P-sites. The polypeptide is Small ribosomal subunit protein uS13 (Beutenbergia cavernae (strain ATCC BAA-8 / DSM 12333 / CCUG 43141 / JCM 11478 / NBRC 16432 / NCIMB 13614 / HKI 0122)).